A 710-amino-acid polypeptide reads, in one-letter code: Conserved oligomeric Golgi complex subunit 2 (710 aa).

It belongs to the COG2 family. Component of the conserved oligomeric Golgi complex which is composed of eight different subunits and is required for normal Golgi morphology and localization.

The protein localises to the golgi apparatus membrane. Functionally, required for normal Golgi morphology and function. The chain is Conserved oligomeric Golgi complex subunit 2 from Drosophila melanogaster (Fruit fly).